The chain runs to 1474 residues: Alpha-2-macroglobulin-P (1474 aa).

The signal sequence occupies residues 1-32; that stretch reads MGKRWLPSLALLPLPPPLLLLLLLLLPTNASA. The cysteines at positions 55 and 93 are disulfide-linked. N-linked (GlcNAc...) asparagine glycans are attached at residues asparagine 62, asparagine 77, and asparagine 253. Intrachain disulfides connect cysteine 257–cysteine 305 and cysteine 275–cysteine 293. A glycan (N-linked (GlcNAc...) asparagine) is linked at asparagine 402. Disulfide bonds link cysteine 476/cysteine 569, cysteine 601/cysteine 771, and cysteine 650/cysteine 697. The segment at 623 to 752 is bait region; it reads LVYDLLPVKD…LVIVDSTGVA (130 aa). Asparagine 654 and asparagine 774 each carry an N-linked (GlcNAc...) asparagine glycan. 5 cysteine pairs are disulfide-bonded: cysteine 821–cysteine 849, cysteine 847–cysteine 883, cysteine 921–cysteine 1321, cysteine 1079–cysteine 1127, and cysteine 1352–cysteine 1467. N-linked (GlcNAc...) asparagine glycosylation occurs at asparagine 869. Positions 972 to 975 form a cross-link, isoglutamyl cysteine thioester (Cys-Gln); that stretch reads CGEQ. An N-linked (GlcNAc...) asparagine glycan is attached at asparagine 991. Asparagine 1366 is a glycosylation site (N-linked (GlcNAc...) asparagine).

This sequence belongs to the protease inhibitor I39 (alpha-2-macroglobulin) family. In terms of assembly, homotetramer; disulfide-linked. As to expression, expressed in uterus, mesometrial lymphoid aggregate and mammary tissue during pregnancy. Expressed in ovary, testis and kidney. Low level expression in heart. Not expressed in liver.

It is found in the secreted. Functionally, is able to inhibit all four classes of proteinases by a unique 'trapping' mechanism. This protein has a peptide stretch, called the 'bait region' which contains specific cleavage sites for different proteinases. When a proteinase cleaves the bait region, a conformational change is induced in the protein which traps the proteinase. The entrapped enzyme remains active against low molecular weight substrates (activity against high molecular weight substrates is greatly reduced). Following cleavage in the bait region a thioester bond is hydrolyzed and mediates the covalent binding of the protein to the proteinase. The chain is Alpha-2-macroglobulin-P from Mus musculus (Mouse).